Here is a 652-residue protein sequence, read N- to C-terminus: DNA ligase (652 aa).

NAD(+)-binding positions include 29–33 (DSEYD), 78–79 (SL), and Glu-107. Lys-109 acts as the N6-AMP-lysine intermediate in catalysis. Residues Arg-130, Glu-164, Lys-278, and Lys-302 each contribute to the NAD(+) site. The Zn(2+) site is built by Cys-395, Cys-398, Cys-413, and Cys-418. The 76-residue stretch at 577–652 (VADAALSGLT…VRDEAWLESL (76 aa)) folds into the BRCT domain.

The protein belongs to the NAD-dependent DNA ligase family. LigA subfamily. Mg(2+) serves as cofactor. It depends on Mn(2+) as a cofactor.

The catalysed reaction is NAD(+) + (deoxyribonucleotide)n-3'-hydroxyl + 5'-phospho-(deoxyribonucleotide)m = (deoxyribonucleotide)n+m + AMP + beta-nicotinamide D-nucleotide.. In terms of biological role, DNA ligase that catalyzes the formation of phosphodiester linkages between 5'-phosphoryl and 3'-hydroxyl groups in double-stranded DNA using NAD as a coenzyme and as the energy source for the reaction. It is essential for DNA replication and repair of damaged DNA. In Streptococcus pneumoniae (strain Taiwan19F-14), this protein is DNA ligase.